The chain runs to 451 residues: MNTNKILETIKMIEEEKLDIRTITMGISLLDCIDSDGEKARMKIYDKITKSAEHLVEVGRQIESEYGIPIVNKRVSVTPISIIAGATNEDSYVKFAQTLDKAADTLGIDFLGGFSALVQKGCTKGDKILISSIPEALAITQKVCASVNVGCTKSGINMNAVRDMGEIIKKTAELTKDKKGFGCAKLVVFANAVEDNPFMAGAFHGVGEAEKIINVGVSGPGVVKRALEKVRGQSFDIVAETIKKTAFKITRMGELVANEASRRLDVPFGIVDLSLAPTPAVGDSVAEILEEIGLERVGTHGTIAALAMLNDAVKKGGVMACSHVGGLSGAFIPVSEDAGMIEAVINGSLNLEKLEGMTCVCSVGLDMIAIPGDTPASTISAMIADEAAIGVINNKTTAVRIIPAPGCKVGDMVEFGGLLGTAPVMKINENSSELFAQRGGRIPAPIHSFKN.

Belongs to the UPF0210 family. Homodimer.

This Clostridium botulinum (strain Alaska E43 / Type E3) protein is UPF0210 protein CLH_1879.